The chain runs to 427 residues: 3-phosphoshikimate 1-carboxyvinyltransferase (427 aa).

Lys22, Ser23, and Arg27 together coordinate 3-phosphoshikimate. A phosphoenolpyruvate-binding site is contributed by Lys22. Gly96 and Arg124 together coordinate phosphoenolpyruvate. Residues Ser169, Ser170, Gln171, Ser197, Asp313, Asn336, and Lys340 each contribute to the 3-phosphoshikimate site. Position 171 (Gln171) interacts with phosphoenolpyruvate. The active-site Proton acceptor is Asp313. Phosphoenolpyruvate is bound by residues Arg344, Arg386, and Lys411.

Belongs to the EPSP synthase family. In terms of assembly, monomer.

It localises to the cytoplasm. The enzyme catalyses 3-phosphoshikimate + phosphoenolpyruvate = 5-O-(1-carboxyvinyl)-3-phosphoshikimate + phosphate. The protein operates within metabolic intermediate biosynthesis; chorismate biosynthesis; chorismate from D-erythrose 4-phosphate and phosphoenolpyruvate: step 6/7. In terms of biological role, catalyzes the transfer of the enolpyruvyl moiety of phosphoenolpyruvate (PEP) to the 5-hydroxyl of shikimate-3-phosphate (S3P) to produce enolpyruvyl shikimate-3-phosphate and inorganic phosphate. In Salmonella schwarzengrund (strain CVM19633), this protein is 3-phosphoshikimate 1-carboxyvinyltransferase.